The chain runs to 248 residues: 1-(5-phosphoribosyl)-5-[(5-phosphoribosylamino)methylideneamino] imidazole-4-carboxamide isomerase (248 aa).

Catalysis depends on Asp-8, which acts as the Proton acceptor. The active-site Proton donor is Asp-129.

Belongs to the HisA/HisF family.

Its subcellular location is the cytoplasm. The enzyme catalyses 1-(5-phospho-beta-D-ribosyl)-5-[(5-phospho-beta-D-ribosylamino)methylideneamino]imidazole-4-carboxamide = 5-[(5-phospho-1-deoxy-D-ribulos-1-ylimino)methylamino]-1-(5-phospho-beta-D-ribosyl)imidazole-4-carboxamide. It functions in the pathway amino-acid biosynthesis; L-histidine biosynthesis; L-histidine from 5-phospho-alpha-D-ribose 1-diphosphate: step 4/9. This chain is 1-(5-phosphoribosyl)-5-[(5-phosphoribosylamino)methylideneamino] imidazole-4-carboxamide isomerase, found in Rhizobium leguminosarum bv. trifolii (strain WSM2304).